The following is a 414-amino-acid chain: Probable cytochrome P450 127A1 (414 aa).

Cys364 contributes to the heme binding site.

This sequence belongs to the cytochrome P450 family. Heme is required as a cofactor.

Cytochromes P450 are a group of heme-thiolate monooxygenases. They oxidize a variety of structurally unrelated compounds, including steroids, fatty acids, and xenobiotics. This is Probable cytochrome P450 127A1 (cyp127A1) from Sinorhizobium fredii (strain NBRC 101917 / NGR234).